A 117-amino-acid chain; its full sequence is UPF0342 protein LEUM_1212 (117 aa).

It belongs to the UPF0342 family.

This Leuconostoc mesenteroides subsp. mesenteroides (strain ATCC 8293 / DSM 20343 / BCRC 11652 / CCM 1803 / JCM 6124 / NCDO 523 / NBRC 100496 / NCIMB 8023 / NCTC 12954 / NRRL B-1118 / 37Y) protein is UPF0342 protein LEUM_1212.